The following is a 361-amino-acid chain: Protein-L-isoaspartate O-methyltransferase domain-containing protein 2 (361 aa).

Gly2 carries N-myristoyl glycine lipidation. Ser64 is an active-site residue. 3 adoMet binding motif regions span residues 85-94 (LNLGSGTGYL), 160-164 (YDRVY), and 181-191 (LKVGGILVMPL). The BC-box stretch occupies residues 240-250 (VRSLQDLARIA). Positions 303-336 (SNPSDDNSCEDLEEERREEEEKTPPETKPDPPVN) are disordered. Residues 309-320 (NSCEDLEEERRE) show a composition bias toward acidic residues. Over residues 321-331 (EEEKTPPETKP) the composition is skewed to basic and acidic residues. Positions 345–348 (LPLP) are CUL-box.

It belongs to the methyltransferase superfamily. L-isoaspartyl/D-aspartyl protein methyltransferase family.

It is found in the cytoplasm. Its function is as follows. May act as a substrate recognition component of an ECS (Elongin BC-CUL5-SOCS-box protein) E3 ubiquitin ligase complex which mediates the ubiquitination and subsequent proteasomal degradation of target proteins. May bind to the methyltransferase cofactor S-adenosylmethionine (AdoMet) via the N-terminal AdoMet binding motif, but probably does not display methyltransferase activity. The protein is Protein-L-isoaspartate O-methyltransferase domain-containing protein 2 (PCMTD2) of Homo sapiens (Human).